The chain runs to 1040 residues: Multidrug resistance protein MdtB (1040 aa).

12 helical membrane passes run Phe-16 to Ile-36, Leu-347 to Ala-367, Ile-369 to Leu-389, Leu-396 to Ile-416, Ile-440 to Phe-460, Phe-472 to Pro-492, Trp-537 to Ile-557, Leu-863 to Ile-883, Phe-888 to Ala-908, Ile-911 to Val-931, Ile-968 to Val-988, and Ile-998 to Ile-1018.

Belongs to the resistance-nodulation-cell division (RND) (TC 2.A.6) family. MdtB subfamily. In terms of assembly, part of a tripartite efflux system composed of MdtA, MdtB and MdtC. MdtB forms a heteromultimer with MdtC.

It is found in the cell inner membrane. Its function is as follows. The MdtABC tripartite complex confers resistance against novobiocin and deoxycholate. The polypeptide is Multidrug resistance protein MdtB (Escherichia coli (strain K12 / MC4100 / BW2952)).